Consider the following 420-residue polypeptide: Putative polyketide beta-ketoacyl synthase 1 (420 aa).

A Ketosynthase family 3 (KS3) domain is found at 3–414; that stretch reads QRRVAITGIE…GFQSAMVLTS (412 aa). Active-site for beta-ketoacyl synthase activity residues include C169, H307, and H344.

This sequence belongs to the thiolase-like superfamily. Beta-ketoacyl-ACP synthases family.

The protein operates within antifungal biosynthesis; monensin biosynthesis. This Streptomyces virginiae (Streptomyces cinnamonensis) protein is Putative polyketide beta-ketoacyl synthase 1.